The following is a 133-amino-acid chain: Profilin (133 aa).

Belongs to the profilin family.

Its function is as follows. More likely to influence phosphoinositide metabolism than actin assembly. The polypeptide is Profilin (Vaccinia virus (strain Tian Tan) (VACV)).